The primary structure comprises 238 residues: Probable transcriptional regulatory protein VPA0011 (238 aa).

The protein belongs to the TACO1 family.

The protein resides in the cytoplasm. In Vibrio parahaemolyticus serotype O3:K6 (strain RIMD 2210633), this protein is Probable transcriptional regulatory protein VPA0011.